Here is a 173-residue protein sequence, read N- to C-terminus: Crossover junction endodeoxyribonuclease RuvC (173 aa).

Catalysis depends on residues aspartate 8, glutamate 67, and aspartate 139. Residues aspartate 8, glutamate 67, and aspartate 139 each coordinate Mg(2+).

This sequence belongs to the RuvC family. In terms of assembly, homodimer which binds Holliday junction (HJ) DNA. The HJ becomes 2-fold symmetrical on binding to RuvC with unstacked arms; it has a different conformation from HJ DNA in complex with RuvA. In the full resolvosome a probable DNA-RuvA(4)-RuvB(12)-RuvC(2) complex forms which resolves the HJ. Requires Mg(2+) as cofactor.

The protein localises to the cytoplasm. It carries out the reaction Endonucleolytic cleavage at a junction such as a reciprocal single-stranded crossover between two homologous DNA duplexes (Holliday junction).. In terms of biological role, the RuvA-RuvB-RuvC complex processes Holliday junction (HJ) DNA during genetic recombination and DNA repair. Endonuclease that resolves HJ intermediates. Cleaves cruciform DNA by making single-stranded nicks across the HJ at symmetrical positions within the homologous arms, yielding a 5'-phosphate and a 3'-hydroxyl group; requires a central core of homology in the junction. The consensus cleavage sequence is 5'-(A/T)TT(C/G)-3'. Cleavage occurs on the 3'-side of the TT dinucleotide at the point of strand exchange. HJ branch migration catalyzed by RuvA-RuvB allows RuvC to scan DNA until it finds its consensus sequence, where it cleaves and resolves the cruciform DNA. The chain is Crossover junction endodeoxyribonuclease RuvC from Enterobacter sp. (strain 638).